The primary structure comprises 536 residues: Phosphoenolpyruvate carboxykinase (ATP) (536 aa).

Positions 61, 195, and 201 each coordinate substrate. Residues lysine 201, histidine 220, and 236-244 (GLSGTGKTT) contribute to the ATP site. 2 residues coordinate Mn(2+): lysine 201 and histidine 220. A Mn(2+)-binding site is contributed by aspartate 257. Glutamate 285, arginine 322, and threonine 447 together coordinate ATP. Arginine 322 is a binding site for substrate.

It belongs to the phosphoenolpyruvate carboxykinase (ATP) family. Requires Mn(2+) as cofactor.

Its subcellular location is the cytoplasm. It carries out the reaction oxaloacetate + ATP = phosphoenolpyruvate + ADP + CO2. The protein operates within carbohydrate biosynthesis; gluconeogenesis. Its function is as follows. Involved in the gluconeogenesis. Catalyzes the conversion of oxaloacetate (OAA) to phosphoenolpyruvate (PEP) through direct phosphoryl transfer between the nucleoside triphosphate and OAA. The sequence is that of Phosphoenolpyruvate carboxykinase (ATP) from Mesorhizobium japonicum (strain LMG 29417 / CECT 9101 / MAFF 303099) (Mesorhizobium loti (strain MAFF 303099)).